A 557-amino-acid chain; its full sequence is Membrane protein insertase YidC (557 aa).

5 consecutive transmembrane segments (helical) span residues T6–H26, I219–D239, I367–F387, L437–L457, and M514–V534.

This sequence belongs to the OXA1/ALB3/YidC family. Type 1 subfamily. As to quaternary structure, interacts with the Sec translocase complex via SecD. Specifically interacts with transmembrane segments of nascent integral membrane proteins during membrane integration.

The protein localises to the cell inner membrane. Required for the insertion and/or proper folding and/or complex formation of integral membrane proteins into the membrane. Involved in integration of membrane proteins that insert both dependently and independently of the Sec translocase complex, as well as at least some lipoproteins. Aids folding of multispanning membrane proteins. The chain is Membrane protein insertase YidC from Polynucleobacter asymbioticus (strain DSM 18221 / CIP 109841 / QLW-P1DMWA-1) (Polynucleobacter necessarius subsp. asymbioticus).